A 212-amino-acid polypeptide reads, in one-letter code: Adenylate kinase (212 aa).

Glycine 10–threonine 15 serves as a coordination point for ATP. The NMP stretch occupies residues serine 30–valine 59. Residues threonine 31, arginine 36, glutamate 57–valine 59, glycine 86–arginine 89, and glutamine 93 contribute to the AMP site. An LID region spans residues glycine 127–aspartate 159. ATP is bound by residues arginine 128 and threonine 137–phenylalanine 138. AMP is bound by residues arginine 156 and arginine 167. Glutamine 195 is an ATP binding site.

Monomer.

Its subcellular location is the cytoplasm. It carries out the reaction AMP + ATP = 2 ADP. The protein operates within purine metabolism; AMP biosynthesis via salvage pathway; AMP from ADP: step 1/1. Its function is as follows. Catalyzes the reversible transfer of the terminal phosphate group between ATP and AMP. Plays an important role in cellular energy homeostasis and in adenine nucleotide metabolism. The chain is Adenylate kinase from Streptococcus pyogenes serotype M6 (strain ATCC BAA-946 / MGAS10394).